The primary structure comprises 199 residues: uncharacterized protein (199 aa).

The segment at 1-48 is disordered; that stretch reads MSANEFYSSGQQGQYNQQNNQERTGAPNNGQYGADNGNPNGERGLFST. Ser-2 carries the N-acetylserine modification. The segment covering 7–21 has biased composition (low complexity); sequence YSSGQQGQYNQQNNQ. Positions 22 to 31 are enriched in polar residues; sequence ERTGAPNNGQ. Phosphoserine is present on residues Ser-53 and Ser-70. Residues 89-199 form a disordered region; the sequence is RKEHKQQEQY…RQGFNGGSRW (111 aa). Gly residues-rich tracts occupy residues 124-163, 170-179, and 186-199; these read GGFG…GFGG, GGPGGQGFGG, and GGQG…GSRW.

The protein resides in the mitochondrion. This is an uncharacterized protein from Saccharomyces cerevisiae (strain ATCC 204508 / S288c) (Baker's yeast).